The primary structure comprises 119 residues: Large ribosomal subunit protein uL14 (119 aa).

It belongs to the universal ribosomal protein uL14 family. As to quaternary structure, part of the 50S ribosomal subunit. Forms a cluster with proteins L3 and L19. In the 70S ribosome, L14 and L19 interact and together make contacts with the 16S rRNA in bridges B5 and B8.

Functionally, binds to 23S rRNA. Forms part of two intersubunit bridges in the 70S ribosome. The protein is Large ribosomal subunit protein uL14 of Wolbachia pipientis wMel.